The primary structure comprises 511 residues: NAD(P)H-quinone oxidoreductase subunit 2 B, chloroplastic (511 aa).

13 helical membrane-spanning segments follow: residues 24–44 (LLLFHGSFIFPECILIFGLIL), 57–77 (IPWLYFISSTSLVMSIAALLF), 99–119 (IFQFLILLCSTLCIPLSVEYI), 124–144 (MAITEFLLFVLTATLGGMFLC), 149–169 (LITIFVAPECFSLCSYLLSGY), 183–203 (YLLMGGASSSILVHGFSWLYG), 227–247 (PGISIALIFITVGIGFKLSPA), 295–315 (WHLLLEILAILSMILGNLIAI), 323–343 (MLAYSSIGQIGYVIIGIIVGD), 354–374 (YMLFYISMNLGTFACIVLFGL), 395–415 (ALSLALCLLSLGGLPPLAGFF), 418–438 (LHLFWCGWQAGLYFLVSIGLL), and 484–504 (MIVCVIASTIPGISMNPIIAI).

It belongs to the complex I subunit 2 family. As to quaternary structure, NDH is composed of at least 16 different subunits, 5 of which are encoded in the nucleus.

It is found in the plastid. The protein resides in the chloroplast thylakoid membrane. It carries out the reaction a plastoquinone + NADH + (n+1) H(+)(in) = a plastoquinol + NAD(+) + n H(+)(out). It catalyses the reaction a plastoquinone + NADPH + (n+1) H(+)(in) = a plastoquinol + NADP(+) + n H(+)(out). In terms of biological role, NDH shuttles electrons from NAD(P)H:plastoquinone, via FMN and iron-sulfur (Fe-S) centers, to quinones in the photosynthetic chain and possibly in a chloroplast respiratory chain. The immediate electron acceptor for the enzyme in this species is believed to be plastoquinone. Couples the redox reaction to proton translocation, and thus conserves the redox energy in a proton gradient. The sequence is that of NAD(P)H-quinone oxidoreductase subunit 2 B, chloroplastic from Nandina domestica (Heavenly bamboo).